A 234-amino-acid chain; its full sequence is LRP chaperone MESD (234 aa).

A signal peptide spans 1 to 33; the sequence is MAASRWARKAVVLLCASDLLLLLLLLPPPGSCA. Positions 1-164 are chaperone domain; that stretch reads MAASRWARKA…DRAIFMLRDG (164 aa). 2 disordered regions span residues 31–95 and 187–234; these read SCAA…DFSK and GQVY…REDL. Basic and acidic residues predominate over residues 54-70; that stretch reads DIRDYNDADMARLLEQW. Residues 71-80 show a composition bias toward acidic residues; the sequence is EKDDDIEEGD. Residues 165 to 204 form an escort domain region; sequence SYAWEIKDFLVGQDRCADVTLEGQVYPGKGGGSKEKNKTK. A compositionally biased stretch (basic and acidic residues) spans 196-234; the sequence is GSKEKNKTKQDKGKKKKEGDLKSRSSKEENRAGNKREDL. The N-linked (GlcNAc...) asparagine glycan is linked to N201. Residues 231-234 carry the Prevents secretion from ER motif; it reads REDL.

Belongs to the MESD family. As to quaternary structure, monomer. Interacts with LRP5; the interaction prevents LRP5 from forming aggregates and chaperones LRP6 to the plasma membrane. Interacts with LRP6; the interaction prevents LRP6 from forming aggregates and chaperones LRP6 to the plasma membrane. Interacts with LRP4; the interaction promotes glycosylation of LRP4 and its cell-surface expression.

It is found in the endoplasmic reticulum. In terms of biological role, chaperone specifically assisting the folding of beta-propeller/EGF modules within the family of low-density lipoprotein receptors (LDLRs). Acts as a modulator of the Wnt pathway through chaperoning the coreceptors of the canonical Wnt pathway, LRP5 and LRP6, to the plasma membrane. Essential for specification of embryonic polarity and mesoderm induction. Plays an essential role in neuromuscular junction (NMJ) formation by promoting cell-surface expression of LRP4. May regulate phagocytosis of apoptotic retinal pigment epithelium (RPE) cells. The sequence is that of LRP chaperone MESD from Homo sapiens (Human).